The primary structure comprises 167 residues: Ribosome maturation factor RimM (167 aa).

One can recognise a PRC barrel domain in the interval 94-165 (ENEFYYSDII…KIIITPMEGL (72 aa)).

Belongs to the RimM family. In terms of assembly, binds ribosomal protein uS19.

It is found in the cytoplasm. An accessory protein needed during the final step in the assembly of 30S ribosomal subunit, possibly for assembly of the head region. Essential for efficient processing of 16S rRNA. May be needed both before and after RbfA during the maturation of 16S rRNA. It has affinity for free ribosomal 30S subunits but not for 70S ribosomes. The chain is Ribosome maturation factor RimM from Staphylococcus aureus (strain NCTC 8325 / PS 47).